The chain runs to 304 residues: Protease HtpX homolog (304 aa).

Transmembrane regions (helical) follow at residues 14-34 and 39-59; these read VFII…IGII and YLNG…IMVM. Zn(2+) is bound at residue His-144. Residue Glu-145 is part of the active site. His-148 contacts Zn(2+). The next 2 membrane-spanning stretches (helical) occupy residues 159-179 and 202-222; these read IAIA…RMIF and AIIY…ATAI. Glu-231 contacts Zn(2+).

Belongs to the peptidase M48B family. The cofactor is Zn(2+).

The protein resides in the cell membrane. This chain is Protease HtpX homolog, found in Listeria monocytogenes serotype 4a (strain HCC23).